The primary structure comprises 322 residues: Hydroxypyruvate reductase (322 aa).

Residues 160–161 (RI), Asp180, 211–212 (CP), 238–240 (NSR), and Asp264 each bind NAD(+). Residue Arg240 is part of the active site. Glu269 is an active-site residue. The active-site Proton donor is His288.

The protein belongs to the D-isomer specific 2-hydroxyacid dehydrogenase family.

It catalyses the reaction (R)-glycerate + NAD(+) = 3-hydroxypyruvate + NADH + H(+). It functions in the pathway carbohydrate metabolism. Involved in catabolism of D-apiose. Catalyzes the reduction of 3-hydroxypyruvate to glycerate. The chain is Hydroxypyruvate reductase from Blautia hydrogenotrophica (strain DSM 10507 / JCM 14656 / S5a33) (Ruminococcus hydrogenotrophicus).